Here is a 274-residue protein sequence, read N- to C-terminus: MKKTALALLALLVSSASLAATPWQKITHPVPGSAQSIGGFSNGCIVGADTLPVQSEHYQVMRTDQRRYFGHPDLVMFIQRLSTQVSNLGFGTVLIGDMGMPAGGRFNGGHASHQTGLDVDIFLQLPKTRWTQAQLLRPQAIDLVSRDGKHVVPSLWKPEISSLIKLAAEDNDVTRIFVNPAIKQQLCLDAGTDRDWLRKVRPWFQHRAHMHVRLRCPADSLECEDQPLPPPGDGCGAELQSWFEPPEPGTTKPEKKTPPPLPPSCQALLDEHVL.

The first 19 residues, 1–19 (MKKTALALLALLVSSASLA), serve as a signal peptide directing secretion. Intrachain disulfides connect cysteine 44/cysteine 265, cysteine 187/cysteine 235, and cysteine 216/cysteine 223. Residues histidine 110, histidine 113, aspartate 120, aspartate 147, histidine 150, and histidine 211 each coordinate Zn(2+). The tract at residues 225-274 (DQPLPPPGDGCGAELQSWFEPPEPGTTKPEKKTPPPLPPSCQALLDEHVL) is disordered.

The protein belongs to the peptidase M74 family. In terms of assembly, dimer. Zn(2+) serves as cofactor.

It is found in the periplasm. In terms of biological role, murein endopeptidase that cleaves the D-alanyl-meso-2,6-diamino-pimelyl amide bond that connects peptidoglycan strands. Likely plays a role in the removal of murein from the sacculus. This chain is Penicillin-insensitive murein endopeptidase, found in Citrobacter koseri (strain ATCC BAA-895 / CDC 4225-83 / SGSC4696).